Here is a 530-residue protein sequence, read N- to C-terminus: AA9 family lytic polysaccharide monooxygenase C (530 aa).

The first 18 residues, 1-18 (MQLKSTVHFLSLLAYTAA), serve as a signal peptide directing secretion. Residues His-19 and His-103 each coordinate Cu(2+). Disulfide bonds link Cys-72/Cys-190 and Cys-114/Cys-118. N-linked (GlcNAc...) asparagine glycosylation is present at Asn-150. O2 is bound at residue Gln-185. Residue Tyr-187 participates in Cu(2+) binding. Positions 238–251 (YGSGSSSSQNSVES) are enriched in low complexity. Disordered stretches follow at residues 238–279 (YGSG…STSA), 297–329 (ESSS…SSSA), 348–375 (YSSA…KLSS), and 492–512 (GNGA…GTTP). Residues 312 to 324 (KSVEAKETTKVEE) are compositionally biased toward basic and acidic residues. Positions 348–368 (YSSASPSSSPVLSSSKPASTS) are enriched in low complexity.

It belongs to the polysaccharide monooxygenase AA9 family. Requires Cu(2+) as cofactor.

It is found in the secreted. It catalyses the reaction [(1-&gt;4)-beta-D-glucosyl]n+m + reduced acceptor + O2 = 4-dehydro-beta-D-glucosyl-[(1-&gt;4)-beta-D-glucosyl]n-1 + [(1-&gt;4)-beta-D-glucosyl]m + acceptor + H2O.. Lytic polysaccharide monooxygenase (LPMO) that depolymerizes polysaccharides via the oxidation of scissile alpha- or beta-(1-4)-glycosidic bonds, yielding C1 or C4 oxidation products. Catalysis by LPMOs requires the reduction of the active-site copper from Cu(II) to Cu(I) by a reducing agent and H(2)O(2) or O(2) as a cosubstrate. Amorphous cellulose is not a suitable substrate for LPMO9C, which may act at the surface of cellulose microfibrils without any release of soluble products. This chain is AA9 family lytic polysaccharide monooxygenase C, found in Geotrichum candidum (Oospora lactis).